A 445-amino-acid chain; its full sequence is Trigger factor (445 aa).

The PPIase FKBP-type domain occupies 164–249 (GDQVTFDFEG…VKKVEEAKLP (86 aa)).

This sequence belongs to the FKBP-type PPIase family. Tig subfamily.

It is found in the cytoplasm. The enzyme catalyses [protein]-peptidylproline (omega=180) = [protein]-peptidylproline (omega=0). In terms of biological role, involved in protein export. Acts as a chaperone by maintaining the newly synthesized protein in an open conformation. Functions as a peptidyl-prolyl cis-trans isomerase. The protein is Trigger factor of Psychrobacter sp. (strain PRwf-1).